A 1172-amino-acid polypeptide reads, in one-letter code: Thrombospondin-2 (1172 aa).

The first 18 residues, 1–18 (MVWRLVLLALWVWPSTQA), serve as a signal peptide directing secretion. Residues 19-215 (GHQDKDTTFD…LQNVHLVFEN (197 aa)) form the Laminin G-like domain. Residues 19 to 232 (GHQDKDTTFD…KKGCQQGQGA (214 aa)) are heparin-binding. Asn151, Asn316, and Asn330 each carry an N-linked (GlcNAc...) asparagine glycan. Residues 318-375 (SACWQDGRFFAENETWVVDSCTTCTCKKFKTICHQITCPPATCASPSFVEGECCPSCL) form the VWFC domain. 3 consecutive TSP type-1 domains span residues 381-431 (EEGW…SKCD), 437-492 (DGGW…APCP), and 494-549 (DGRW…RSCP). Cystine bridges form between Cys393–Cys425, Cys397–Cys430, Cys408–Cys415, Cys449–Cys486, Cys453–Cys491, Cys464–Cys476, Cys506–Cys543, Cys510–Cys548, Cys521–Cys533, Cys553–Cys564, Cys558–Cys574, Cys577–Cys588, Cys594–Cys610, Cys601–Cys619, Cys622–Cys646, Cys652–Cys665, Cys659–Cys678, Cys680–Cys691, Cys707–Cys715, Cys720–Cys740, Cys756–Cys776, Cys779–Cys799, Cys815–Cys835, Cys838–Cys858, Cys876–Cys896, Cys912–Cys932, and Cys948–Cys1169. Asn457 is a glycosylation site (N-linked (GlcNAc...) asparagine). The EGF-like 1 domain maps to 549 to 589 (PVDGCLSNPCFPGAQCSSFPDGSWSCGSCPVGFLGNGTHCE). N-linked (GlcNAc...) asparagine glycosylation is present at Asn584. Residues 648–692 (PENPCKDKTHNCHKHAECIYLGHFSDPMYKCECQTGYAGDGLICG) form the EGF-like 2 domain. TSP type-3 repeat units lie at residues 693–728 (EDSDLDGWPNLNLVCATNATYHCIKDNCPHLPNSGQ), 729–764 (EDFDKDGIGDACDDDDDNDGVTDEKDNCQLLFNPRQ), 765–787 (ADYDKDEVGDRCDNCPYVHNPAQ), 788–823 (IDTDNNGEGDACSVDIDGDDVFNERDNCPYVYNTDQ), 824–846 (RDTDGDGVGDHCDNCPLVHNPDQ), 847–884 (TDVDNDLVGDQCDNNEDIDDDGHQNNQDNCPYISNANQ), 885–920 (ADHDRDGQGDACDPDDDNDGVPDDRDNCRLVFNPDQ), and 921–956 (EDLDGDGRGDICKDDFDNDNIPDIDDVCPENNAISE). Asn710 carries an N-linked (GlcNAc...) asparagine glycan. Residues 843–931 (NPDQTDVDND…DLDGDGRGDI (89 aa)) form a disordered region. The segment covering 847-866 (TDVDNDLVGDQCDNNEDIDD) has biased composition (acidic residues). Polar residues predominate over residues 870–884 (QNNQDNCPYISNANQ). The span at 896–905 (CDPDDDNDGV) shows a compositional bias: acidic residues. Residues 928–930 (RGD) carry the Cell attachment site motif. One can recognise a TSP C-terminal domain in the interval 960-1172 (RNFQMVPLDP…SDLKYECRDI (213 aa)). Asn1069 is a glycosylation site (N-linked (GlcNAc...) asparagine).

Belongs to the thrombospondin family. As to quaternary structure, homotrimer; disulfide-linked. Interacts (via the TSP type I repeats) with CD36; the interaction conveys an antiangiogenic effect. Interacts (via the TSP type I repeats) with HRG; the interaction blocks the antiangiogenic effect of THBS2 with CD36. Can bind to fibrinogen, fibronectin, laminin and type V collagen. As to expression, high expression in invertebral disk tissue.

In terms of biological role, adhesive glycoprotein that mediates cell-to-cell and cell-to-matrix interactions. Ligand for CD36 mediating antiangiogenic properties. The chain is Thrombospondin-2 (THBS2) from Homo sapiens (Human).